A 309-amino-acid polypeptide reads, in one-letter code: Olfactory receptor 2AP1 (309 aa).

The Extracellular portion of the chain corresponds to 1 to 23 (MKNKTVLTEFILLGLTDVPELQV). N3 carries an N-linked (GlcNAc...) asparagine glycan. A helical membrane pass occupies residues 24 to 47 (AVFTFLFLAYLLSILGNLTILILT). Residues 48–55 (LLDSHLQT) are Cytoplasmic-facing. A helical membrane pass occupies residues 56–77 (PMYFFLRNFSFLEISFTNIFIP). Over 78-98 (RVLISITTGNKSISFAGCFTQ) the chain is Extracellular. A glycan (N-linked (GlcNAc...) asparagine) is linked at N87. Cysteines 95 and 187 form a disulfide. Residues 99 to 118 (YFFAMFLGATEFYLLAAMSY) traverse the membrane as a helical segment. The Cytoplasmic segment spans residues 119–137 (DRYVAICKPLHYTTIMSSR). The chain crosses the membrane as a helical span at residues 138 to 156 (ICIQLIFCSWLGGLMAIIP). The Extracellular portion of the chain corresponds to 157-193 (TITLMSQQDFCASNRLNHYFCDYEPLLELSCSDTSLI). The helical transmembrane segment at 194 to 217 (EKVVFLVASVTLVVTLVLVILSYA) threads the bilayer. Residues 218–234 (FIIKTILKLPSAQQRTK) are Cytoplasmic-facing. A helical transmembrane segment spans residues 235-257 (AFSTCSSHMIVISLSYGSCMFMY). The Extracellular segment spans residues 258 to 270 (INPSAKEGDTFNK). A helical membrane pass occupies residues 271-290 (GVALLITSVAPLLNPFIYTL). Residues 291 to 309 (RNQQVKQPFKDMVKKLLNL) are Cytoplasmic-facing.

It belongs to the G-protein coupled receptor 1 family.

It is found in the cell membrane. Its function is as follows. Odorant receptor. This is Olfactory receptor 2AP1 (OR2AP1) from Homo sapiens (Human).